A 212-amino-acid chain; its full sequence is Cytidylate kinase (212 aa).

7-15 (GPAASGKGT) provides a ligand contact to ATP.

The protein belongs to the cytidylate kinase family. Type 1 subfamily.

Its subcellular location is the cytoplasm. The catalysed reaction is CMP + ATP = CDP + ADP. It catalyses the reaction dCMP + ATP = dCDP + ADP. This chain is Cytidylate kinase, found in Rhodopseudomonas palustris (strain HaA2).